The following is a 370-amino-acid chain: Accessory Sec system protein translocase subunit SecY2 (370 aa).

The next 9 helical transmembrane spans lie at 17 to 37, 65 to 85, 105 to 125, 134 to 154, 155 to 175, 188 to 208, 240 to 260, 276 to 296, and 339 to 359; these read IIFTCWILLIYIFGTHIPAIT, VFSLGLGPWLTAMIFMTLFYY, IFTLILALIQAYFVVFTLLSH, WLIILVLVTGAMILVWLSDLN, MRFGIAGPMPIVMISIIRSIM, LLISAALVLIIILLVLIFIEI, IAIMISFAAFFVLNSAVNLIV, FSTPIGITIFLILQLVLSYGI, and WIGAFIVTIIIGIPLYATLLI.

This sequence belongs to the SecY/SEC61-alpha family. SecY2 subfamily. As to quaternary structure, component of the accessory SecA2/SecY2 protein translocase complex required to export cell wall proteins. May form heterotrimers with SecE and SecG subunits.

Its subcellular location is the cell membrane. In terms of biological role, part of the accessory SecA2/SecY2 system specifically required for export of possible cell wall proteins. The central subunit of a protein translocation channel. The polypeptide is Accessory Sec system protein translocase subunit SecY2 (Staphylococcus carnosus (strain TM300)).